Consider the following 840-residue polypeptide: Leucine-zipper-like transcriptional regulator 1 (840 aa).

Ala-2 bears the N-acetylalanine mark. Kelch repeat units lie at residues 79-128 (AIYV…VYGS), 130-185 (MFVF…VYSD), 187-238 (LWIF…VCRD), 239-285 (KMFV…QRRY), 295-341 (HLYV…PERA), and 399-450 (AMYI…FVLG). BTB domains lie at 443–537 (CDVE…KYPR) and 667–736 (CDIT…NMPP).

This sequence belongs to the LZTR1 family. Homodimer. Component of the BCR(LZTR1) E3 ubiquitin ligase complex, at least composed of CUL3, LZTR1 and RBX1. Interacts with Ras (K-Ras/KRAS, N-Ras/NRAS and H-Ras/HRAS). Interacts with RAF1. Interacts with SHOC2. Interacts with PPP1CB. Phosphorylated on tyrosine upon induction of apoptosis, leading to its degradation by the proteasome.

Its subcellular location is the endomembrane system. It is found in the recycling endosome. The protein localises to the golgi apparatus. It participates in protein modification; protein ubiquitination. In terms of biological role, substrate-specific adapter of a BCR (BTB-CUL3-RBX1) E3 ubiquitin-protein ligase complex that mediates ubiquitination of Ras (K-Ras/KRAS, N-Ras/NRAS and H-Ras/HRAS). Is a negative regulator of RAS-MAPK signaling that acts by controlling Ras levels and decreasing Ras association with membranes. This Homo sapiens (Human) protein is Leucine-zipper-like transcriptional regulator 1.